Reading from the N-terminus, the 352-residue chain is Putative conjugal transfer protein MT3759 (352 aa).

160 to 167 provides a ligand contact to ATP; the sequence is GGTGAGKT.

It belongs to the GSP E family.

Its subcellular location is the cytoplasm. The protein is Putative conjugal transfer protein MT3759 of Mycobacterium tuberculosis (strain CDC 1551 / Oshkosh).